A 448-amino-acid chain; its full sequence is MSTSIKEKVSLVSLGCPKNLVDAEVMLGYLAKEKYEVTTDEREADIIIVNTCSFIKEAKQESIDTILDLADRKHDARCRLLIVTGCLPQRYQEELVKELPEVDIFVGTGDYPRIAEIIAEKEGMSEQLRYTGDPNFLYDEDLPRLQSSPYYTAYLKIAEGCSNCCSYCVIPSLRGAFRSRPLDKLLKEARELVARGVKEINLIAQDITGYGKDLAGGASLEGLIKELAALDGLQWIRLLYAYPDGISDSLIQLIRDEDKVCKYLDIPLQHVSDPVLKRMNRRSSEAEIRSLIAKLRGEIPGIALRTSLIVGFPGETDEDFKKLLHFVEETRFDRLGVFCYSREEGTPSAEMPDQVSERVKRERYKKLMRTQARVSFKHNRSLVDTEELVLIEGYSEETELLLKGRSSKQAPDIDGQVYVTSGNAQIGDIVKLRITDSSDYDLIGEIVP.

An MTTase N-terminal domain is found at 7–123 (EKVSLVSLGC…IAEIIAEKEG (117 aa)). Residues C16, C52, C86, C161, C165, and C168 each contribute to the [4Fe-4S] cluster site. A Radical SAM core domain is found at 147-377 (SSPYYTAYLK…MRTQARVSFK (231 aa)). The region spanning 380–448 (RSLVDTEELV…DYDLIGEIVP (69 aa)) is the TRAM domain.

It belongs to the methylthiotransferase family. RimO subfamily. The cofactor is [4Fe-4S] cluster.

The protein resides in the cytoplasm. The enzyme catalyses L-aspartate(89)-[ribosomal protein uS12]-hydrogen + (sulfur carrier)-SH + AH2 + 2 S-adenosyl-L-methionine = 3-methylsulfanyl-L-aspartate(89)-[ribosomal protein uS12]-hydrogen + (sulfur carrier)-H + 5'-deoxyadenosine + L-methionine + A + S-adenosyl-L-homocysteine + 2 H(+). In terms of biological role, catalyzes the methylthiolation of an aspartic acid residue of ribosomal protein uS12. This chain is Ribosomal protein uS12 methylthiotransferase RimO, found in Geotalea uraniireducens (strain Rf4) (Geobacter uraniireducens).